The following is a 117-amino-acid chain: UPF0342 protein LGAS_1451 (117 aa).

It belongs to the UPF0342 family.

The polypeptide is UPF0342 protein LGAS_1451 (Lactobacillus gasseri (strain ATCC 33323 / DSM 20243 / BCRC 14619 / CIP 102991 / JCM 1131 / KCTC 3163 / NCIMB 11718 / NCTC 13722 / AM63)).